Consider the following 551-residue polypeptide: Small ribosomal subunit protein bS1 (551 aa).

6 consecutive S1 motif domains span residues 21 to 83 (GALV…LSRE), 101 to 167 (GEMV…VSRR), 188 to 256 (GQEI…LGMK), 273 to 343 (NSRV…LGIK), 360 to 430 (DEKI…LGIK), and 447 to 516 (DAVI…VSHK).

It belongs to the bacterial ribosomal protein bS1 family.

Its function is as follows. Binds mRNA; thus facilitating recognition of the initiation point. It is needed to translate mRNA with a short Shine-Dalgarno (SD) purine-rich sequence. This chain is Small ribosomal subunit protein bS1 (rpsA), found in Coxiella burnetii (strain RSA 493 / Nine Mile phase I).